The sequence spans 209 residues: Probable chalcone--flavanone isomerase 3 (209 aa).

This sequence belongs to the chalcone isomerase family.

The catalysed reaction is a chalcone = a flavanone.. The protein operates within secondary metabolite biosynthesis; flavonoid biosynthesis. In terms of biological role, involved in anthocyanin biosynthesis. In Arabidopsis thaliana (Mouse-ear cress), this protein is Probable chalcone--flavanone isomerase 3 (CHI3).